Reading from the N-terminus, the 204-residue chain is Proteasome subunit beta type-3-A (204 aa).

The protein belongs to the peptidase T1B family. Component of the 20S core complex of the 26S proteasome. The 26S proteasome is composed of a core protease (CP), known as the 20S proteasome, capped at one or both ends by the 19S regulatory particle (RP/PA700). The 20S proteasome core is composed of 28 subunits that are arranged in four stacked rings, resulting in a barrel-shaped structure. The two end rings are each formed by seven alpha subunits, and the two central rings are each formed by seven beta subunits. The catalytic chamber with the active sites is on the inside of the barrel.

It is found in the cytoplasm. The protein resides in the nucleus. Non-catalytic component of the proteasome, a multicatalytic proteinase complex which is characterized by its ability to cleave peptides with Arg, Phe, Tyr, Leu, and Glu adjacent to the leaving group at neutral or slightly basic pH. The proteasome has an ATP-dependent proteolytic activity. The polypeptide is Proteasome subunit beta type-3-A (PBC1) (Arabidopsis thaliana (Mouse-ear cress)).